The chain runs to 186 residues: Protein GrpE (186 aa).

The span at 1-15 shows a compositional bias: polar residues; that stretch reads MADEQQTLDQQTPEQ. The segment at 1–20 is disordered; sequence MADEQQTLDQQTPEQPTGAA.

This sequence belongs to the GrpE family. Homodimer.

Its subcellular location is the cytoplasm. Participates actively in the response to hyperosmotic and heat shock by preventing the aggregation of stress-denatured proteins, in association with DnaK and GrpE. It is the nucleotide exchange factor for DnaK and may function as a thermosensor. Unfolded proteins bind initially to DnaJ; upon interaction with the DnaJ-bound protein, DnaK hydrolyzes its bound ATP, resulting in the formation of a stable complex. GrpE releases ADP from DnaK; ATP binding to DnaK triggers the release of the substrate protein, thus completing the reaction cycle. Several rounds of ATP-dependent interactions between DnaJ, DnaK and GrpE are required for fully efficient folding. The protein is Protein GrpE of Pseudomonas aeruginosa (strain LESB58).